The chain runs to 156 residues: Putative pre-16S rRNA nuclease (156 aa).

Belongs to the YqgF nuclease family.

It is found in the cytoplasm. Its function is as follows. Could be a nuclease involved in processing of the 5'-end of pre-16S rRNA. The chain is Putative pre-16S rRNA nuclease from Caulobacter vibrioides (strain ATCC 19089 / CIP 103742 / CB 15) (Caulobacter crescentus).